Here is a 344-residue protein sequence, read N- to C-terminus: MNKKSLNIVATLGILLVLAFSGCVDQSASDSTSEEKVLKIFHAGSLAVPFLEYETLYEDEYPNVDVQRESAGSVACVRKITELNKTAEILASADYTLIPDMMMPDYADWYVMVSKNEIVIAYTENSQYYDEITSDNWYEIFQRDGVKYGFSSPNDDPCGYRTQMVVQLAETAYGDSTIYDNLMLKNSNFMVDENADGTYLVRSPSTIDVNEDKVFMRSKEVDLLGPLETGAFDYLFIYKSVANQHNLSFIELPDEINLGNYANADDYATTSIILEGQNSTILAKPIVYGMTVPSNADDYEEGVSFTKMVLEHPEVFENSGQPAISPAIAIGNVPEELSDLVVMG.

The N-terminal stretch at 1-28 is a signal peptide; sequence MNKKSLNIVATLGILLVLAFSGCVDQSA.

Belongs to the bacterial solute-binding protein 1 family. WtpA subfamily.

This is an uncharacterized protein from Methanococcus maripaludis (strain C7 / ATCC BAA-1331).